The chain runs to 383 residues: GTPase-interacting component 2 (383 aa).

Residues 63-106 (SNKKNIELPPLSPNSHPSCHHRRSNSNSAKSKESSSSSSSANKT) are disordered. Residues 87–105 (NSNSAKSKESSSSSSSANK) show a composition bias toward low complexity. The CRIB domain occupies 134–147 (ISTPFDFQHISHAD). Over residues 155 to 165 (EQLQEPSSLST) the composition is skewed to polar residues. The disordered stretch occupies residues 155–189 (EQLQEPSSLSTEIKDDYTSSSSKRDSKSLNKAFVT). Positions 166 to 182 (EIKDDYTSSSSKRDSKS) are enriched in basic and acidic residues. Residues Ser254, Ser258, Ser337, Ser345, and Ser367 each carry the phosphoserine modification. The segment at 319–361 (ETPNSNKDSAKAFFPSRQSPLPKRRNSIATPSPQSKFSYSDSP) is disordered. Polar residues predominate over residues 345 to 361 (SIATPSPQSKFSYSDSP).

Belongs to the BORG/CEP family. Interacts with GTP-bound CDC42.

Its subcellular location is the bud neck. It is found in the bud tip. The protein localises to the cytoplasm. The protein resides in the cell cortex. It localises to the cytoskeleton. Its function is as follows. Required for cell size and shape control, bud site selection, bud emergence, actin cytoskeletal organization, mitotic spindle orientation/positioning, and mating projection formation in response to mating pheromone. This Saccharomyces cerevisiae (strain ATCC 204508 / S288c) (Baker's yeast) protein is GTPase-interacting component 2 (GIC2).